We begin with the raw amino-acid sequence, 450 residues long: Phosphoglucosamine mutase (450 aa).

Ser101 (phosphoserine intermediate) is an active-site residue. Mg(2+)-binding residues include Ser101, Asp241, Asp243, and Asp245. Position 101 is a phosphoserine (Ser101).

It belongs to the phosphohexose mutase family. Mg(2+) serves as cofactor. In terms of processing, activated by phosphorylation.

It carries out the reaction alpha-D-glucosamine 1-phosphate = D-glucosamine 6-phosphate. Its function is as follows. Catalyzes the conversion of glucosamine-6-phosphate to glucosamine-1-phosphate. The chain is Phosphoglucosamine mutase from Listeria innocua serovar 6a (strain ATCC BAA-680 / CLIP 11262).